The primary structure comprises 504 residues: Glutamate--tRNA ligase (504 aa).

The 'HIGH' region motif lies at 25-35 (PSPTGNPHVGL). Zn(2+) is bound by residues Cys-122, Cys-124, Cys-149, and Asp-151. The 'KMSKS' region motif lies at 270–274 (KLSKR). Position 273 (Lys-273) interacts with ATP.

The protein belongs to the class-I aminoacyl-tRNA synthetase family. Glutamate--tRNA ligase type 1 subfamily. As to quaternary structure, monomer. It depends on Zn(2+) as a cofactor.

It is found in the cytoplasm. It catalyses the reaction tRNA(Glu) + L-glutamate + ATP = L-glutamyl-tRNA(Glu) + AMP + diphosphate. Catalyzes the attachment of glutamate to tRNA(Glu) in a two-step reaction: glutamate is first activated by ATP to form Glu-AMP and then transferred to the acceptor end of tRNA(Glu). This Streptomyces griseus subsp. griseus (strain JCM 4626 / CBS 651.72 / NBRC 13350 / KCC S-0626 / ISP 5235) protein is Glutamate--tRNA ligase.